The following is a 257-amino-acid chain: Ribosomal RNA small subunit methyltransferase A (257 aa).

Residues N12, L14, G39, E60, D85, and N105 each coordinate S-adenosyl-L-methionine.

The protein belongs to the class I-like SAM-binding methyltransferase superfamily. rRNA adenine N(6)-methyltransferase family. RsmA subfamily.

It is found in the cytoplasm. It catalyses the reaction adenosine(1518)/adenosine(1519) in 16S rRNA + 4 S-adenosyl-L-methionine = N(6)-dimethyladenosine(1518)/N(6)-dimethyladenosine(1519) in 16S rRNA + 4 S-adenosyl-L-homocysteine + 4 H(+). Functionally, specifically dimethylates two adjacent adenosines (A1518 and A1519) in the loop of a conserved hairpin near the 3'-end of 16S rRNA in the 30S particle. May play a critical role in biogenesis of 30S subunits. This is Ribosomal RNA small subunit methyltransferase A from Methylococcus capsulatus (strain ATCC 33009 / NCIMB 11132 / Bath).